A 421-amino-acid chain; its full sequence is Anthranilate synthase component 1 (421 aa).

L-tryptophan contacts are provided by residues S31 and 207–209 (PYM). 242–243 (GT) lines the chorismate pocket. Mg(2+) is bound at residue E269. Residues Y357, R377, 391-393 (GAG), and G393 contribute to the chorismate site. A Mg(2+)-binding site is contributed by E406.

Belongs to the anthranilate synthase component I family. Heterotetramer consisting of two non-identical subunits: a beta subunit (TrpG) and a large alpha subunit (TrpE). Mg(2+) serves as cofactor.

The catalysed reaction is chorismate + L-glutamine = anthranilate + pyruvate + L-glutamate + H(+). Its pathway is amino-acid biosynthesis; L-tryptophan biosynthesis; L-tryptophan from chorismate: step 1/5. With respect to regulation, cooperatively feedback inhibited by tryptophan. Part of a heterotetrameric complex that catalyzes the two-step biosynthesis of anthranilate, an intermediate in the biosynthesis of L-tryptophan. In the first step, the glutamine-binding beta subunit (TrpG) of anthranilate synthase (AS) provides the glutamine amidotransferase activity which generates ammonia as a substrate that, along with chorismate, is used in the second step, catalyzed by the large alpha subunit of AS (TrpE) to produce anthranilate. In the absence of TrpG, TrpE can synthesize anthranilate directly from chorismate and high concentrations of ammonia. The protein is Anthranilate synthase component 1 (trpE) of Saccharolobus solfataricus (strain ATCC 35092 / DSM 1617 / JCM 11322 / P2) (Sulfolobus solfataricus).